Reading from the N-terminus, the 467-residue chain is Histone acetyltransferase type B catalytic subunit (467 aa).

The segment at 1–24 (MVQKQQASAGPGTEPKKRRRVGFS) is disordered. Residues 249 to 251 (ILV) and 256 to 262 (QGKGLGS) each bind acetyl-CoA. E283 acts as the Proton donor/acceptor in catalysis.

The protein belongs to the HAT1 family.

The protein localises to the nucleus. The protein resides in the cytoplasm. It catalyses the reaction L-lysyl-[protein] + acetyl-CoA = N(6)-acetyl-L-lysyl-[protein] + CoA + H(+). Its function is as follows. Acetylates soluble but not nucleosomal H4. Acetylates 'Lys-12' of histone H4. This Arabidopsis thaliana (Mouse-ear cress) protein is Histone acetyltransferase type B catalytic subunit (HAG2).